The sequence spans 229 residues: uncharacterized protein (229 aa).

Positions 2-69 (QRLAKLISNA…KSRLWIYYKP (68 aa)) constitute an S4 RNA-binding domain. D102 (nucleophile) is an active-site residue.

The protein belongs to the pseudouridine synthase RsuA family.

The enzyme catalyses a uridine in RNA = a pseudouridine in RNA. This is an uncharacterized protein from Rickettsia bellii (strain RML369-C).